The following is a 224-amino-acid chain: Pro-thyrotropin-releasing hormone-B (224 aa).

An N-terminal signal peptide occupies residues 1–15; that stretch reads MMFLWWLLLLGTAIS. Position 75 is a pyrrolidone carboxylic acid (Gln75). The residue at position 77 (Pro77) is a Proline amide. The segment covering 86 to 101 has biased composition (basic and acidic residues); sequence EKRQHPGKRDLEDLQL. Disordered stretches follow at residues 86-131 and 150-212; these read EKRQ…DWSR and RQHP…NSGN. Residue Gln89 is modified to Pyrrolidone carboxylic acid. Pro91 carries the post-translational modification Proline amide. Position 105 is a pyrrolidone carboxylic acid (Gln105). Residue Pro107 is modified to Proline amide. Over residues 110-129 the composition is skewed to basic and acidic residues; that stretch reads RYLEDMEKRQHPGKREEGDW. Position 119 is a pyrrolidone carboxylic acid (Gln119). Pro121 bears the Proline amide mark. Pyrrolidone carboxylic acid is present on Gln151. Proline amide is present on Pro153. A Pyrrolidone carboxylic acid modification is found at Gln166. Pro168 is modified (proline amide). Residues 182–199 are compositionally biased toward basic and acidic residues; that stretch reads ENSKEVGKRQHPGKRYDP. Gln191 bears the Pyrrolidone carboxylic acid mark. A Proline amide modification is found at Pro193.

Belongs to the TRH family.

It is found in the secreted. The chain is Pro-thyrotropin-releasing hormone-B (trh-b) from Xenopus laevis (African clawed frog).